The sequence spans 685 residues: Mesothelin-like protein (685 aa).

The first 32 residues, 1–32 (MSRTLRPSAMGSRVGALASPGLALLLSLTAHC), serve as a signal peptide directing secretion. Residues 33–627 (SGPQAKGLPK…GVSHTSGSPP (595 aa)) are Extracellular-facing. Asn315 and Asn400 each carry an N-linked (GlcNAc...) asparagine glycan. Positions 603–624 (PPSSLIHSLDPPGNDGVSHTSG) are disordered. A helical transmembrane segment spans residues 628-648 (VHLGYLSLAVALPSSLLWLLL). Topologically, residues 649–685 (CQLPSGQMATAHRTLGPMALAQGSWTPEHQIPEKRSC) are cytoplasmic.

This sequence belongs to the mesothelin family.

Its subcellular location is the membrane. In terms of biological role, may play a role in cellular adhesion. The chain is Mesothelin-like protein (Mslnl) from Mus musculus (Mouse).